The primary structure comprises 199 residues: NAD(P)H-quinone oxidoreductase chain 6 (199 aa).

Transmembrane regions (helical) follow at residues 9–29 (IVSFAILAAMMIGSAIGVVLL), 32–52 (VVYSAFLLGGVFISIAGLYLL), 61–81 (AQVLIYVGAVNVLILFAIMLV), 102–122 (LVCAGIFALLSAMVLTTPWAI), and 143–163 (FLLPFELASILLLMALVGAIV).

Belongs to the complex I subunit 6 family.

The protein localises to the membrane. The catalysed reaction is a plastoquinone + NADH + (n+1) H(+)(in) = a plastoquinol + NAD(+) + n H(+)(out). It catalyses the reaction a plastoquinone + NADPH + (n+1) H(+)(in) = a plastoquinol + NADP(+) + n H(+)(out). Functionally, NDH-1 shuttles electrons from NAD(P)H, via FMN and iron-sulfur (Fe-S) centers, to quinones in the respiratory chain. The immediate electron acceptor for the enzyme in this species is believed to be plastoquinone. Couples the redox reaction to proton translocation (for every two electrons transferred, four hydrogen ions are translocated across the cytoplasmic membrane), and thus conserves the redox energy in a proton gradient. This Leptolyngbya boryana (Plectonema boryanum) protein is NAD(P)H-quinone oxidoreductase chain 6 (ndhG).